Here is a 146-residue protein sequence, read N- to C-terminus: uncharacterized protein (146 aa).

This is an uncharacterized protein from Orgyia pseudotsugata multicapsid polyhedrosis virus (OpMNPV).